Here is a 316-residue protein sequence, read N- to C-terminus: tRNA dimethylallyltransferase (316 aa).

Residue 17 to 24 (GPTASGKT) participates in ATP binding. Residue 19-24 (TASGKT) coordinates substrate. Interaction with substrate tRNA regions lie at residues 42–45 (DSAL), 166–170 (QRLSR), and 247–252 (RCVGYR).

It belongs to the IPP transferase family. As to quaternary structure, monomer. Requires Mg(2+) as cofactor.

It catalyses the reaction adenosine(37) in tRNA + dimethylallyl diphosphate = N(6)-dimethylallyladenosine(37) in tRNA + diphosphate. Catalyzes the transfer of a dimethylallyl group onto the adenine at position 37 in tRNAs that read codons beginning with uridine, leading to the formation of N6-(dimethylallyl)adenosine (i(6)A). In Salmonella schwarzengrund (strain CVM19633), this protein is tRNA dimethylallyltransferase.